We begin with the raw amino-acid sequence, 313 residues long: Serine/threonine-protein phosphatase PP2A-4 catalytic subunit (313 aa).

Residues D61, H63, D89, and N121 each coordinate Mn(2+). H122 (proton donor) is an active-site residue. Mn(2+) is bound by residues H171 and H245. L313 bears the Leucine methyl ester mark.

The protein belongs to the PPP phosphatase family. PP-2A subfamily. In terms of assembly, PP2A consists of a common heterodimeric core enzyme, composed of a 36 kDa catalytic subunit (subunit C) and a 65 kDa constant regulatory subunit (subunit A), that associates with a variety of regulatory subunits such as subunits B (the R2/B/PR55/B55, R3/B''/PR72/PR130/PR59 and R5/B'/B56 families). Interacts with SIC/RON3. The cofactor is Mn(2+). In terms of processing, reversibly methyl esterified on Leu-313 by leucine carboxyl methyltransferase 1 (LCMT1) and pectin methylesterase 1 (PME1). Carboxyl methylation influences the affinity of the catalytic subunit for the different regulatory subunits, thereby modulating the PP2A holoenzyme's substrate specificity, enzyme activity and cellular localization. Post-translationally, phosphorylation of either threonine (by autophosphorylation-activated protein kinase) or tyrosine results in inactivation of the phosphatase. Auto-dephosphorylation has been suggested as a mechanism for reactivation.

The protein localises to the cytoplasm. The enzyme catalyses O-phospho-L-seryl-[protein] + H2O = L-seryl-[protein] + phosphate. It catalyses the reaction O-phospho-L-threonyl-[protein] + H2O = L-threonyl-[protein] + phosphate. Functions redundantly with PP2A3, and is involved in establishing auxin gradients, apical-basal axis of polarity and root and shoot apical meristem during embryogenesis. May dephosphorylate PIN1 and regulate its subcellular distribution for polar auxin transport. The holoenzyme composed of PP2AA1, PP2A4 and B'ZETA or B'ETA acts as a negative regulator of plant innate immunity by controlling BAK1 phosphorylation state and activation in surface-localized immune receptor complexes. This chain is Serine/threonine-protein phosphatase PP2A-4 catalytic subunit, found in Arabidopsis thaliana (Mouse-ear cress).